Consider the following 152-residue polypeptide: Large ribosomal subunit protein bL9 (152 aa).

Belongs to the bacterial ribosomal protein bL9 family.

Functionally, binds to the 23S rRNA. The chain is Large ribosomal subunit protein bL9 from Gloeothece citriformis (strain PCC 7424) (Cyanothece sp. (strain PCC 7424)).